Consider the following 542-residue polypeptide: CTP synthase (542 aa).

The interval 1–265 is amidoligase domain; that stretch reads MARYVFITGG…DNEVLAAFGI (265 aa). Serine 13 provides a ligand contact to CTP. Serine 13 is a binding site for UTP. Residues 14–19 and aspartate 71 contribute to the ATP site; that span reads SLGKGI. Positions 71 and 139 each coordinate Mg(2+). CTP-binding positions include 146–148, 186–191, and lysine 222; these read DIE and KTKPTQ. UTP contacts are provided by residues 186 to 191 and lysine 222; that span reads KTKPTQ. A Glutamine amidotransferase type-1 domain is found at 291–541; sequence TIAIVGKYTG…IEAALEQSRL (251 aa). L-glutamine is bound at residue glycine 353. Cysteine 380 functions as the Nucleophile; for glutamine hydrolysis in the catalytic mechanism. Residues 381-384, glutamate 404, and arginine 469 contribute to the L-glutamine site; that span reads FGMQ. Catalysis depends on residues histidine 514 and glutamate 516.

It belongs to the CTP synthase family. Homotetramer.

It carries out the reaction UTP + L-glutamine + ATP + H2O = CTP + L-glutamate + ADP + phosphate + 2 H(+). The catalysed reaction is L-glutamine + H2O = L-glutamate + NH4(+). The enzyme catalyses UTP + NH4(+) + ATP = CTP + ADP + phosphate + 2 H(+). The protein operates within pyrimidine metabolism; CTP biosynthesis via de novo pathway; CTP from UDP: step 2/2. Allosterically activated by GTP, when glutamine is the substrate; GTP has no effect on the reaction when ammonia is the substrate. The allosteric effector GTP functions by stabilizing the protein conformation that binds the tetrahedral intermediate(s) formed during glutamine hydrolysis. Inhibited by the product CTP, via allosteric rather than competitive inhibition. Its function is as follows. Catalyzes the ATP-dependent amination of UTP to CTP with either L-glutamine or ammonia as the source of nitrogen. Regulates intracellular CTP levels through interactions with the four ribonucleotide triphosphates. This Sinorhizobium medicae (strain WSM419) (Ensifer medicae) protein is CTP synthase.